The primary structure comprises 256 residues: Protein LIKE COV 1 (256 aa).

Residues 1-10 (MANRERDREL) show a composition bias toward basic and acidic residues. The interval 1-39 (MANRERDRELLIPVADFGDKDDGSSSKPSSSSSASSSHQ) is disordered. The Cytoplasmic portion of the chain corresponds to 1–60 (MANRERDRELLIPVADFGDKDDGSSSKPSSSSSASSSHQSGHETLSLFIRGWASKKFMTG). Low complexity predominate over residues 25 to 39 (SSKPSSSSSASSSHQ). A helical transmembrane segment spans residues 61–81 (CVILLPIAVTFYTTWWFIHFV). The Extracellular portion of the chain corresponds to 82-93 (DGFFSPIYALLG). Residues 94-114 (INIFGFGFLTSIAFIFLVGVF) form a helical membrane-spanning segment. The Cytoplasmic segment spans residues 115 to 256 (MSSWLGASVL…KPLASIGNES (142 aa)).

It belongs to the plant COV1 protein family. As to expression, expressed at low levels in flowers, stems, roots and leaves.

Its subcellular location is the membrane. The protein is Protein LIKE COV 1 of Arabidopsis thaliana (Mouse-ear cress).